Reading from the N-terminus, the 177-residue chain is ATP synthase subunit delta (177 aa).

It belongs to the ATPase delta chain family. In terms of assembly, F-type ATPases have 2 components, F(1) - the catalytic core - and F(0) - the membrane proton channel. F(1) has five subunits: alpha(3), beta(3), gamma(1), delta(1), epsilon(1). F(0) has three main subunits: a(1), b(2) and c(10-14). The alpha and beta chains form an alternating ring which encloses part of the gamma chain. F(1) is attached to F(0) by a central stalk formed by the gamma and epsilon chains, while a peripheral stalk is formed by the delta and b chains.

It is found in the cell inner membrane. F(1)F(0) ATP synthase produces ATP from ADP in the presence of a proton or sodium gradient. F-type ATPases consist of two structural domains, F(1) containing the extramembraneous catalytic core and F(0) containing the membrane proton channel, linked together by a central stalk and a peripheral stalk. During catalysis, ATP synthesis in the catalytic domain of F(1) is coupled via a rotary mechanism of the central stalk subunits to proton translocation. Its function is as follows. This protein is part of the stalk that links CF(0) to CF(1). It either transmits conformational changes from CF(0) to CF(1) or is implicated in proton conduction. The sequence is that of ATP synthase subunit delta from Shewanella loihica (strain ATCC BAA-1088 / PV-4).